The following is a 154-amino-acid chain: MRYSFVIQWDFETVYTGVNSTTNLAFSVKAMTTNFANLQELQDSLVLRGQNLTTQLFWKPTVKRLVLGNNNDLTTVAKAAVGDNLFTTQANLTKSVLDQTVLKEAESRFEATVLKPFIEARQKALAEHQAHQKVLEEQRQKQLEELKQKQKEAE.

It belongs to the MG032/MG096/MG288 family.

This is an uncharacterized protein from Mycoplasma pneumoniae (strain ATCC 29342 / M129 / Subtype 1) (Mycoplasmoides pneumoniae).